Here is a 483-residue protein sequence, read N- to C-terminus: 3-isopropylmalate dehydratase large subunit (483 aa).

Cys-352, Cys-412, and Cys-415 together coordinate [4Fe-4S] cluster.

It belongs to the aconitase/IPM isomerase family. LeuC type 1 subfamily. In terms of assembly, heterodimer of LeuC and LeuD. The cofactor is [4Fe-4S] cluster.

The enzyme catalyses (2R,3S)-3-isopropylmalate = (2S)-2-isopropylmalate. It participates in amino-acid biosynthesis; L-leucine biosynthesis; L-leucine from 3-methyl-2-oxobutanoate: step 2/4. Functionally, catalyzes the isomerization between 2-isopropylmalate and 3-isopropylmalate, via the formation of 2-isopropylmaleate. The polypeptide is 3-isopropylmalate dehydratase large subunit (Paenarthrobacter aurescens (strain TC1)).